We begin with the raw amino-acid sequence, 363 residues long: Spermidine/putrescine import ATP-binding protein PotA (363 aa).

The 231-residue stretch at 6-236 (LEIRNVTRRF…PRSRFVADFI (231 aa)) folds into the ABC transporter domain. 38-45 (GPSGCGKT) contacts ATP.

Belongs to the ABC transporter superfamily. Spermidine/putrescine importer (TC 3.A.1.11.1) family. The complex is composed of two ATP-binding proteins (PotA), two transmembrane proteins (PotB and PotC) and a solute-binding protein (PotD).

The protein localises to the cell inner membrane. The catalysed reaction is ATP + H2O + polyamine-[polyamine-binding protein]Side 1 = ADP + phosphate + polyamineSide 2 + [polyamine-binding protein]Side 1.. In terms of biological role, part of the ABC transporter complex PotABCD involved in spermidine/putrescine import. Responsible for energy coupling to the transport system. This is Spermidine/putrescine import ATP-binding protein PotA from Pseudomonas aeruginosa (strain UCBPP-PA14).